A 145-amino-acid polypeptide reads, in one-letter code: Superoxide dismutase [Mn/Fe] (145 aa).

The Fe(3+) site is built by His-10 and His-64. Mn(2+) contacts are provided by His-10 and His-64.

Belongs to the iron/manganese superoxide dismutase family. The cofactor is Mn(2+). It depends on Fe(3+) as a cofactor.

It catalyses the reaction 2 superoxide + 2 H(+) = H2O2 + O2. Destroys superoxide anion radicals which are normally produced within the cells and which are toxic to biological systems. Catalyzes the dismutation of superoxide anion radicals into O2 and H2O2 by successive reduction and oxidation of the transition metal ion at the active site. The chain is Superoxide dismutase [Mn/Fe] (sodA) from Streptococcus alactolyticus.